The primary structure comprises 77 residues: MSLIRDFSFWNRIIINIYNFIEISDNYFDHILQFEKIKSPIYYKHVQGNRCQITNGYLISIRILYYLSAKITTLDSS.

This is an uncharacterized protein from Vaccinia virus (strain Copenhagen) (VACV).